The following is a 408-amino-acid chain: E3 ubiquitin-protein ligase At1g12760 (408 aa).

Residues Met-1–Arg-52 form a disordered region. Residues Ser-10 to Gly-34 show a composition bias toward low complexity. A run of 2 helical transmembrane segments spans residues Val-100 to Val-120 and Val-133 to Tyr-153. A disordered region spans residues Arg-160 to Ser-195. The segment covering Arg-163–Ser-183 has biased composition (low complexity). 3 helical membrane-spanning segments follow: residues Ala-219–Gly-239, Ile-254–Ile-274, and Gly-275–Gln-295. The RING-type; atypical zinc finger occupies Cys-353–Lys-394.

It is found in the membrane. It carries out the reaction S-ubiquitinyl-[E2 ubiquitin-conjugating enzyme]-L-cysteine + [acceptor protein]-L-lysine = [E2 ubiquitin-conjugating enzyme]-L-cysteine + N(6)-ubiquitinyl-[acceptor protein]-L-lysine.. It functions in the pathway protein modification; protein ubiquitination. Mediates E2-dependent protein ubiquitination in vitro. The polypeptide is E3 ubiquitin-protein ligase At1g12760 (Arabidopsis thaliana (Mouse-ear cress)).